Here is a 94-residue protein sequence, read N- to C-terminus: uncharacterized protein (94 aa).

The N-terminal stretch at 1-25 (MRAAIAVLFIALVGLATYHLVMSQA) is a signal peptide.

This is an uncharacterized protein from Archaeoglobus fulgidus (strain ATCC 49558 / DSM 4304 / JCM 9628 / NBRC 100126 / VC-16).